The primary structure comprises 569 residues: Cationic amino acid transporter 5 (569 aa).

Over 1–67 (MEGEERGYWR…KQSEHEMKRC (67 aa)) the chain is Cytoplasmic. The helical transmembrane segment at 68–88 (LTWWDLVWFGFGSVIGAGIFV) threads the bilayer. At 89–97 (LTGQEAHEQ) the chain is on the extracellular side. Residues 98–118 (AGPAIVLSYVVSGLSAMLSVF) form a helical membrane-spanning segment. The Cytoplasmic segment spans residues 119-143 (CYTEFAVEIPVAGGSFAYLRIELGD). Residues 144–164 (FAAFITAGNILLESIVGTAAV) traverse the membrane as a helical segment. Residues 165–192 (ARAWTSYFATLLNRSPNALRIKTDLSSG) lie on the Extracellular side of the membrane. The helical transmembrane segment at 193–213 (FNLLDPIAVVVIAASATIASI) threads the bilayer. Residues 214–222 (STRKTSLLN) lie on the Cytoplasmic side of the membrane. The helical transmembrane segment at 223–243 (WIASAINTLVIFFVIIAGFIH) threads the bilayer. Over 244-251 (ADTSNLTP) the chain is Extracellular. The helical transmembrane segment at 252 to 272 (FLPFGPEGVFRAAAVVYFAYG) threads the bilayer. Topologically, residues 273-290 (GFDSIATMAEETKNPSRD) are cytoplasmic. Residues 291-311 (IPIGLLGSMSIITVIYCLMAL) traverse the membrane as a helical segment. At 312–341 (SLSMMQKYTDIDPNAAYSVAFQSVGMKWGK) the chain is on the extracellular side. A helical membrane pass occupies residues 342–362 (YLVALGALKGMTTVLLVGALG). Over 363–389 (QARYVTHIARTHMIPPIFALVHPKTGT) the chain is Cytoplasmic. The helical transmembrane segment at 390-410 (PINANLLVAIPSALIAFFSGL) threads the bilayer. Position 411 (D411) is a topological domain, extracellular. A helical membrane pass occupies residues 412 to 432 (VLASLLSISTLFIFTMMPIAL). Topologically, residues 433–450 (LVRRYYVRQDTPRVHLIK) are cytoplasmic. The chain crosses the membrane as a helical span at residues 451–471 (LITCLLFVVVSSMGTSAYWGM). At 472–477 (QRKGSW) the chain is on the extracellular side. The helical transmembrane segment at 478 to 498 (IGYTVTVPFWFLGTLGIVFFV) threads the bilayer. The Cytoplasmic segment spans residues 499-505 (PQQRTPK). A helical transmembrane segment spans residues 506 to 526 (VWGVPLVPWLPCLSIATNIFL). The Extracellular segment spans residues 527 to 537 (MGSLGAMAFVR). The helical transmembrane segment at 538 to 558 (FGVCTLAMLLYYFLLGLHATF) threads the bilayer. The Cytoplasmic segment spans residues 559–569 (DMAHQQIVPRT).

It belongs to the amino acid-polyamine-organocation (APC) superfamily. Cationic amino acid transporter (CAT) (TC 2.A.3.3) family. Expressed in roots, stems, flowers, seeds, and leaves. Mostly present in leaf rims and cotyledons of developing seedlings.

The protein resides in the cell membrane. Its function is as follows. High-affinity permease involved in the transport of the cationic amino acids (e.g. arginine, and, to a lower extent, citrulline and glutamate). Transport mostly basic amino acids, and, to a lower extent neutral and acidic amino acids. The sequence is that of Cationic amino acid transporter 5 (CAT5) from Arabidopsis thaliana (Mouse-ear cress).